The primary structure comprises 215 residues: Ribose-5-phosphate isomerase A (215 aa).

Substrate is bound by residues 26–29, 79–82, and 92–95; these read TGST, DGAD, and KGGG. Residue Glu-101 is the Proton acceptor of the active site. Lys-119 serves as a coordination point for substrate.

It belongs to the ribose 5-phosphate isomerase family. In terms of assembly, homodimer.

It carries out the reaction aldehydo-D-ribose 5-phosphate = D-ribulose 5-phosphate. The protein operates within carbohydrate degradation; pentose phosphate pathway; D-ribose 5-phosphate from D-ribulose 5-phosphate (non-oxidative stage): step 1/1. Functionally, catalyzes the reversible conversion of ribose-5-phosphate to ribulose 5-phosphate. The polypeptide is Ribose-5-phosphate isomerase A (Xanthomonas axonopodis pv. citri (strain 306)).